We begin with the raw amino-acid sequence, 237 residues long: Coat protein (237 aa).

A disordered region spans residues 1–24 (MSAPASTTQPIGSTTSTTTKTAGA).

It belongs to the potexvirus capsid protein family.

It localises to the virion. Its function is as follows. Required for genome encapsidation. Forms ribonucleoprotein complexes along with TGB1 helicase and viral RNA. The sequence is that of Coat protein from Potato virus X (strain UK3) (PVX).